The primary structure comprises 278 residues: Ribosomal protein L11 methyltransferase (278 aa).

S-adenosyl-L-methionine-binding residues include Thr131, Gly152, Asp173, and Asn214.

The protein belongs to the methyltransferase superfamily. PrmA family.

Its subcellular location is the cytoplasm. It carries out the reaction L-lysyl-[protein] + 3 S-adenosyl-L-methionine = N(6),N(6),N(6)-trimethyl-L-lysyl-[protein] + 3 S-adenosyl-L-homocysteine + 3 H(+). In terms of biological role, methylates ribosomal protein L11. The sequence is that of Ribosomal protein L11 methyltransferase from Campylobacter lari (strain RM2100 / D67 / ATCC BAA-1060).